The primary structure comprises 147 residues: MTCGKPADYRYGEHTADVLIQAYGCTLEEAFVNAAVALAEVTYSTSKVEPKHSREVEVEYDDLEGLLFKWIDELLYLFDAEKFAISRKIDLKLEKDGGYRIKAVLYGDIYSQEKHGFTGLIVKAMTFHMMEIRQIGDYWMVQYVVDI.

Asp-17, Asp-146, and Ile-147 together coordinate Ca(2+).

It belongs to the archease family.

Activates the tRNA-splicing ligase complex by facilitating the enzymatic turnover of catalytic subunit RtcB. Acts by promoting the guanylylation of RtcB, a key intermediate step in tRNA ligation. Can also alter the NTP specificity of RtcB such that ATP, dGTP or ITP is used efficiently. This is Protein archease from Pyrobaculum neutrophilum (strain DSM 2338 / JCM 9278 / NBRC 100436 / V24Sta) (Thermoproteus neutrophilus).